Reading from the N-terminus, the 500-residue chain is Cytochrome P450 2D28 (500 aa).

Cysteine 446 contributes to the heme binding site.

This sequence belongs to the cytochrome P450 family. It depends on heme as a cofactor.

Its subcellular location is the endoplasmic reticulum membrane. The protein resides in the microsome membrane. This chain is Cytochrome P450 2D28 (CYP2D28A), found in Mesocricetus auratus (Golden hamster).